Here is a 741-residue protein sequence, read N- to C-terminus: Exostosin-1b (741 aa).

The Cytoplasmic segment spans residues 1–7 (MQAKKRY). A helical; Signal-anchor for type II membrane protein transmembrane segment spans residues 8–28 (LISLLTGAFLVLLIYLGGGGV). The Lumenal portion of the chain corresponds to 29–741 (PGPAAPGSRS…RKKYREIERL (713 aa)). N-linked (GlcNAc...) asparagine glycosylation is found at asparagine 84 and asparagine 325. Positions 435, 544, 560, 561, 562, 648, 649, and 696 each coordinate UDP-N-acetyl-alpha-D-glucosamine. Aspartate 562 lines the Mn(2+) pocket. The cysteines at positions 647 and 699 are disulfide-linked. Aspartate 649 is an active-site residue.

The protein belongs to the glycosyltransferase 47 family. Mn(2+) serves as cofactor.

It localises to the endoplasmic reticulum membrane. The enzyme catalyses 3-O-{[(1-&gt;4)-beta-D-GlcA-(1-&gt;4)-alpha-D-GlcNAc](n)-(1-&gt;4)-beta-D-GlcA-(1-&gt;3)-beta-D-Gal-(1-&gt;3)-beta-D-Gal-(1-&gt;4)-beta-D-Xyl}-L-seryl-[protein] + UDP-N-acetyl-alpha-D-glucosamine = 3-O-{alpha-D-GlcNAc-[(1-&gt;4)-beta-D-GlcA-(1-&gt;4)-alpha-D-GlcNAc](n)-(1-&gt;4)-beta-D-GlcA-(1-&gt;3)-beta-D-Gal-(1-&gt;3)-beta-D-Gal-(1-&gt;4)-beta-D-Xyl}-L-seryl-[protein] + UDP + H(+). It catalyses the reaction 3-O-{alpha-D-GlcNAc-[(1-&gt;4)-beta-D-GlcA-(1-&gt;4)-alpha-D-GlcNAc](n)-(1-&gt;4)-beta-D-GlcA-(1-&gt;3)-beta-D-Gal-(1-&gt;3)-beta-D-Gal-(1-&gt;4)-beta-D-Xyl}-L-seryl-[protein] + UDP-alpha-D-glucuronate = 3-O-{[(1-&gt;4)-beta-D-GlcA-(1-&gt;4)-alpha-D-GlcNAc](n+1)-(1-&gt;4)-beta-D-GlcA-(1-&gt;3)-beta-D-Gal-(1-&gt;3)-beta-D-Gal-(1-&gt;4)-beta-D-Xyl}-L-seryl-[protein] + UDP + H(+). The protein operates within protein modification; protein glycosylation. Glycosyltransferase required for the biosynthesis of heparan-sulfate. This chain is Exostosin-1b (ext1b), found in Danio rerio (Zebrafish).